A 564-amino-acid polypeptide reads, in one-letter code: MKSMQYHPPTTTLVSEFNKEKYNNSNHYNDNNDNNNNNNNNNNDNNNNDNNNNNNNNNNSIINNESDNESNGTSNNYNDEANDNHHHHQDDEHHGNGNDNDNENYNNQNVNHEKLASIKNKNYNNNESDNESIEEINSNHNNDNNNNTNNNDNSSNNNNNNNNSNNNNNNNSKEINEDKENYNNCDQHHHNHNNNNNNKYNGGSSYNYNSKNCKEYINNLENLLKLSNKENKELYEKIISLGSILNEKKTLLSKYRNVLIDYLEDVHIYDENGNANPNYDNYNNTQQKSIKDFDVGKDLVKSNLNLQFHNYNNKDYNKEYNNNNNGNNNKDYNNNKEYNNINNNNISSNNNNNNNNNNNNNSSNKEYKEKEYKEKEYKEKEFKESKDSSLKRKSSSDDDGDDSGRDTKKYKPGRTVWTLEEEELYKEVFNHYGKNWKKIKTHFPDKSKSQVTSHGQYLIKINKLQDLQKVKSPPTLNITLNDIIEQLKQQQQQQQQQQQQQQQQQQQQQQQQQNNIVINNENTNDNNNHNNNNYNDNNNNSNNNNNFNNSNNNNTNKFIDEDDD.

3 disordered regions span residues Tyr-22–Asn-107, Asn-122–Gly-203, and Asn-310–Tyr-410. Positions Asn-23 to Asp-79 are enriched in low complexity. Residues Asn-82–Asn-96 are compositionally biased toward basic and acidic residues. 4 stretches are compositionally biased toward low complexity: residues Gly-97–Asn-107, Glu-135–Lys-173, Asn-193–Gly-203, and Asn-310–Asn-364. Positions Lys-365–Lys-409 are enriched in basic and acidic residues. The SANT domain maps to Pro-412–Leu-464. The segment covering Asn-519–Asn-556 has biased composition (low complexity). Residues Asn-519 to Asp-564 form a disordered region.

The protein localises to the nucleus. In Dictyostelium discoideum (Social amoeba), this protein is Myb-like protein F (mybF).